We begin with the raw amino-acid sequence, 219 residues long: Vesicle-associated membrane protein 721 (219 aa).

Residues 1 to 196 are Cytoplasmic-facing; that stretch reads MAQQSLIYSF…MWLQNMKIKL (196 aa). Positions 10 to 114 constitute a Longin domain; that stretch reads FVARGTVILV…SLNKEFGSKL (105 aa). A v-SNARE coiled-coil homology domain is found at 130 to 190; it reads KLAKVKAQVS…TQMRRKMWLQ (61 aa). A helical; Anchor for type IV membrane protein membrane pass occupies residues 197 to 217; it reads IVLAIIIALILIIVLSVCHGF. Residues 218–219 are Vesicular-facing; that stretch reads KC.

It belongs to the synaptobrevin family. In terms of tissue distribution, expressed in flowers, leaves, stems and roots.

It is found in the cell membrane. Its subcellular location is the early endosome membrane. Involved in the targeting and/or fusion of transport vesicles to their target membrane. The sequence is that of Vesicle-associated membrane protein 721 from Arabidopsis thaliana (Mouse-ear cress).